A 503-amino-acid chain; its full sequence is Intracellular exo-alpha-(1-&gt;5)-L-arabinofuranosidase (503 aa).

3 residues coordinate alpha-L-arabinofuranose: Glu-27, Asn-72, and Asn-172. The active-site Proton donor/acceptor is the Glu-173. The alpha-L-arabinofuranose site is built by Tyr-244, Glu-292, and Gln-352. Glu-292 (nucleophile) is an active-site residue.

This sequence belongs to the glycosyl hydrolase 51 family. Homohexamer; trimer of dimers.

The protein localises to the cytoplasm. The catalysed reaction is Hydrolysis of terminal non-reducing alpha-L-arabinofuranoside residues in alpha-L-arabinosides.. Its pathway is glycan metabolism; L-arabinan degradation. Involved in the degradation of arabinan and is a key enzyme in the complete degradation of the plant cell wall. Catalyzes the cleavage of terminal alpha-(1-&gt;5)-arabinofuranosyl bonds in small oligosaccharides as alpha-(1-&gt;5)-linked arabinobiose/arabinotriose, but does not display significant activity against linear non-substituted arabinan. It is also highly efficient in the cleavage of alpha-(1-&gt;3)-linked arabinoside of xylobiose and of the alpha-(1-&gt;3)-linked arabinoside decorations of polymeric wheat arabinoxylan. It exhibits very low activity against sugar beet arabinan. The sequence is that of Intracellular exo-alpha-(1-&gt;5)-L-arabinofuranosidase from Acetivibrio thermocellus (strain ATCC 27405 / DSM 1237 / JCM 9322 / NBRC 103400 / NCIMB 10682 / NRRL B-4536 / VPI 7372) (Clostridium thermocellum).